A 78-amino-acid chain; its full sequence is Large ribosomal subunit protein uL24 (78 aa).

Positions 52–78 (PSEKTPNGGHVNKEMPIDISNVAKVEG) are disordered.

The protein belongs to the universal ribosomal protein uL24 family. As to quaternary structure, part of the 50S ribosomal subunit.

Functionally, one of two assembly initiator proteins, it binds directly to the 5'-end of the 23S rRNA, where it nucleates assembly of the 50S subunit. In terms of biological role, one of the proteins that surrounds the polypeptide exit tunnel on the outside of the subunit. The protein is Large ribosomal subunit protein uL24 of Campylobacter concisus (strain 13826).